Consider the following 326-residue polypeptide: Adenosine receptor A1 (326 aa).

The Extracellular portion of the chain corresponds to 1-10 (MPPYISAFQA). The helical transmembrane segment at 11 to 33 (AYIGIEVLIALVSVPGNVLVIWA) threads the bilayer. The Cytoplasmic segment spans residues 34 to 46 (VKVNQALRDATFC). Residues 47–69 (FIVSLAVADVAVGALVIPLAILI) traverse the membrane as a helical segment. Topologically, residues 70–80 (NIGPQTYFHTC) are extracellular. Cysteines 80 and 169 form a disulfide. A helical membrane pass occupies residues 81-102 (LMVACPVLILTQSSILALLAIA). Residues 103 to 123 (VDRYLRVKIPLRYKTVVTQRR) are Cytoplasmic-facing. Residues 124 to 146 (AAVAIAGCWILSLVVGLTPMFGW) form a helical membrane-spanning segment. At 147-176 (NNLSEVEQAWIANGSVGEPVIKCEFEKVIS) the chain is on the extracellular side. 2 N-linked (GlcNAc...) asparagine glycosylation sites follow: Asn148 and Asn159. Residues 177-201 (MEYMVYFNFFVWVLPPLLLMVLIYL) traverse the membrane as a helical segment. Topologically, residues 202–235 (EVFYLIRKQLNKKVSASSGDPQKYYGKELKIAKS) are cytoplasmic. A helical membrane pass occupies residues 236–259 (LALILFLFALSWLPLHILNCITLF). Residues 260 to 267 (CPTCQKPS) are Extracellular-facing. Residues 268-292 (ILIYIAIFLTHGNSAMNPIVYAFRI) form a helical membrane-spanning segment. Residues 293–326 (HKFRVTFLKIWNDHFRCQPKPPIEEDIPEEKADD) are Cytoplasmic-facing. Cys309 is lipidated: S-palmitoyl cysteine.

Belongs to the G-protein coupled receptor 1 family.

It is found in the cell membrane. Its function is as follows. Receptor for adenosine. The activity of this receptor is mediated by G proteins which inhibit adenylyl cyclase. This chain is Adenosine receptor A1 (Adora1), found in Mus musculus (Mouse).